We begin with the raw amino-acid sequence, 220 residues long: uncharacterized protein (220 aa).

4 helical membrane-spanning segments follow: residues 61-81, 85-105, 115-135, and 150-170; these read LISV…SFFG, SVMF…YGAF, FVII…ILLL, and LPLE…SLLL.

The protein localises to the membrane. This is an uncharacterized protein from Caenorhabditis elegans.